A 408-amino-acid chain; its full sequence is Protein SLX4IP (408 aa).

Glycyl lysine isopeptide (Lys-Gly) (interchain with G-Cter in SUMO2) cross-links involve residues Lys61 and Lys79. Residue Ser130 is modified to Phosphoserine. Residues Lys167 and Lys176 each participate in a glycyl lysine isopeptide (Lys-Gly) (interchain with G-Cter in SUMO2) cross-link. Residues 173-226 are disordered; the sequence is TETKSSVTSKSQTRRDTVETSSDSVIAEIARRRNDGQASSSPPSESMGQAKDSI. Polar residues predominate over residues 208 to 219; that stretch reads GQASSSPPSESM. At Ser213 the chain carries Phosphoserine. Residues Lys239 and Lys242 each participate in a glycyl lysine isopeptide (Lys-Gly) (interchain with G-Cter in SUMO2) cross-link. Over residues 243–255 the composition is skewed to polar residues; the sequence is VNQTQPEDTSGQQ. Residues 243 to 313 are disordered; that stretch reads VNQTQPEDTS…DFDHHGRVSL (71 aa). Glycyl lysine isopeptide (Lys-Gly) (interchain with G-Cter in SUMO2) cross-links involve residues Lys256, Lys291, Lys347, Lys356, and Lys372. Positions 365 to 408 are disordered; the sequence is LSSRHLMKNNPGQAQQTGLATNTERLSTIQNSPTKKRKKYERGH. The span at 374–397 shows a compositional bias: polar residues; it reads NPGQAQQTGLATNTERLSTIQNSP. Thr392 is subject to Phosphothreonine. Residues 398 to 408 show a composition bias toward basic residues; that stretch reads TKKRKKYERGH. Lys399 participates in a covalent cross-link: Glycyl lysine isopeptide (Lys-Gly) (interchain with G-Cter in SUMO2).

It belongs to the SLX4IP family. As to quaternary structure, interacts with SLX4/BTBD12; subunit of different structure-specific endonucleases.

The sequence is that of Protein SLX4IP (SLX4IP) from Homo sapiens (Human).